Reading from the N-terminus, the 157-residue chain is Cell cycle control protein 50C (157 aa).

The Cytoplasmic portion of the chain corresponds to 1 to 34 (MEERAQHCLSRLLDNSALKQQELPIHRLYFTARR). The chain crosses the membrane as a helical span at residues 35–55 (VLFVFFATGIFCLCMGIILIL). The Extracellular portion of the chain corresponds to 56–157 (SARSTQEIEI…LFLNQVDFSV (102 aa)). N66 carries N-linked (GlcNAc...) asparagine glycosylation.

Belongs to the CDC50/LEM3 family.

The protein localises to the membrane. The protein is Cell cycle control protein 50C (TMEM30C) of Pan troglodytes (Chimpanzee).